A 620-amino-acid chain; its full sequence is MHLHYKPNGCLFILQNAIDCARLTGQSIYTIEVFRPVRNIWNRAQEWARAAITPAGLGWMSKYIYQYHRLMLMNLSPREPATHNWPLYNYPPPHILVGYQKLLQICNDYIFDVRAYSRLKYSEQINFGSQLMNWSVMANCSYTINTGAYHRFIDMDNFSDTLTSIQQAILAEKIVADLALIRPMRGFGRTNLDADHDVPVEYLLQEQSKDIGACQERAWGLADRIRVQNAGRKDLVILTTIRKLKTAYFNFFLVKHLPLAPEQELSLPCDCFWLDAFIQKFAESDQAAEIDEALRLQQVPTQTLTKCIISALSLPNCAGTALRGGAFTLRPREGNRAVTESMRRARGEMIEQFVDRLPMRRRRRREVPQPQVAAEEYPSEPEELSFESEVRTAVAETIRLLEEELTVSARNQQFFNFAVNFYEVIQRLEALGDINETTLQRWVMYFFVAEHIATTLNYLNHQIRVSSPFGRYVMLNLAQVVMRARNEDGQIVYSRARNENGNTVLVTSCLALALTWLPQLREQGEEIRAGRDEQFMAEIAYHDNSGDVSEILKQVAVNDADIDSMEISFRFRVTGPVVFSGLREIQNINRRVIRAATLFRQERRPLPALNERVQLPPAQE.

The Nuclear localization signal motif lies at 356–365 (RLPMRRRRRR). Serine 545 is subject to O-(5'-phospho-DNA)-serine.

It belongs to the adenoviridae terminal protein family. In terms of assembly, heterodimer with the polymerase; this heterodimer binds to bp 9 to 18 of the genome. Interacts with host POU2F1; POU2F1 binds to the auxiliary sequences in the inverted terminal repeats and tethers the pTP-POL heterodimer to the origin DNA thereby participating in the assembly of the pre-initiation complex (POL-TP-DBP-NFIA-POU2F1). In terms of processing, preterminal protein is used to replicate viral genome, upon genomic encapsidation it is processed first into iTP and finally into TP by adenovirus protease.

Its subcellular location is the host nucleus matrix. In terms of biological role, protein covalently bound to the viral DNA that acts as a primer for viral genomic replication by DNA strand displacement. Assembles on the viral origin of replication in an initiation complex with viral polymerase, DBP, host NFIA and host POU2F1/OCT1. During initiation, the polymerase covalently couples the first dCTP with Ser-580 of pTP. The terminal protein stimulates the template activity over 20 fold compared to protein-free templates. Neo-synthesized viral genomes are linked to two preterminal proteins, one for each 5' end. These new genomes are encapsidated in the nucleus, and during capsid maturation by viral protease, preterminal protein is first cleaved into intermediary (iTP), then into mature TP. May play a role in host nuclear matrix localization of genomic DNA. This Bovine adenovirus 2 (BAdV-2) protein is Preterminal protein.